A 352-amino-acid polypeptide reads, in one-letter code: Photosystem II D2 protein 2 (352 aa).

A helical membrane pass occupies residues 40–60; that stretch reads CAYLALGGWLTGTSFVTSWYT. H117 provides a ligand contact to chlorophyll a. A helical transmembrane segment spans residues 124–140; that stretch reads GFMLRQFEIARLVGVRP. Q129 and N142 together coordinate pheophytin a. A helical membrane pass occupies residues 152-165; the sequence is VFVSVFLMYPLGQS. H197 lines the chlorophyll a pocket. A helical transmembrane segment spans residues 207 to 227; the sequence is GALLCAIHGATVENTLFEDSE. A plastoquinone contacts are provided by H214 and F261. Fe cation is bound at residue H214. H268 provides a ligand contact to Fe cation. Residues 278 to 294 traverse the membrane as a helical segment; the sequence is GLWMSSIGIVGLALNLR.

This sequence belongs to the reaction center PufL/M/PsbA/D family. PSII is composed of 1 copy each of membrane proteins PsbA, PsbB, PsbC, PsbD, PsbE, PsbF, PsbH, PsbI, PsbJ, PsbK, PsbL, PsbM, PsbT, PsbX, PsbY, PsbZ, Psb30/Ycf12, peripheral proteins PsbO, CyanoQ (PsbQ), PsbU, PsbV and a large number of cofactors. It forms dimeric complexes. The D1/D2 heterodimer binds P680, chlorophylls that are the primary electron donor of PSII, and subsequent electron acceptors. It shares a non-heme iron and each subunit binds pheophytin, quinone, additional chlorophylls, carotenoids and lipids. There is also a Cl(-1) ion associated with D1 and D2, which is required for oxygen evolution. The PSII complex binds additional chlorophylls, carotenoids and specific lipids. is required as a cofactor.

The protein resides in the cellular thylakoid membrane. It catalyses the reaction 2 a plastoquinone + 4 hnu + 2 H2O = 2 a plastoquinol + O2. Photosystem II (PSII) is a light-driven water:plastoquinone oxidoreductase that uses light energy to abstract electrons from H(2)O, generating O(2) and a proton gradient subsequently used for ATP formation. It consists of a core antenna complex that captures photons, and an electron transfer chain that converts photonic excitation into a charge separation. The D1/D2 (PsbA/PsbD) reaction center heterodimer binds P680, the primary electron donor of PSII as well as several subsequent electron acceptors. D2 is needed for assembly of a stable PSII complex. The protein is Photosystem II D2 protein 2 of Synechococcus sp. (strain ATCC 27144 / PCC 6301 / SAUG 1402/1) (Anacystis nidulans).